We begin with the raw amino-acid sequence, 310 residues long: Glycerol-3-phosphate dehydrogenase [NAD(P)+] (310 aa).

NADPH contacts are provided by Trp-19, Arg-39, Arg-40, and Lys-87. Positions 87 and 115 each coordinate sn-glycerol 3-phosphate. Residue Ser-119 coordinates NADPH. 5 residues coordinate sn-glycerol 3-phosphate: Lys-170, Asp-223, Ser-233, Arg-234, and Asn-235. Lys-170 acts as the Proton acceptor in catalysis. Arg-234 contributes to the NADPH binding site. Residue Glu-260 participates in NADPH binding.

It belongs to the NAD-dependent glycerol-3-phosphate dehydrogenase family.

The protein resides in the cytoplasm. The enzyme catalyses sn-glycerol 3-phosphate + NAD(+) = dihydroxyacetone phosphate + NADH + H(+). The catalysed reaction is sn-glycerol 3-phosphate + NADP(+) = dihydroxyacetone phosphate + NADPH + H(+). Its pathway is membrane lipid metabolism; glycerophospholipid metabolism. Its function is as follows. Catalyzes the reduction of the glycolytic intermediate dihydroxyacetone phosphate (DHAP) to sn-glycerol 3-phosphate (G3P), the key precursor for phospholipid synthesis. In Synechococcus sp. (strain JA-3-3Ab) (Cyanobacteria bacterium Yellowstone A-Prime), this protein is Glycerol-3-phosphate dehydrogenase [NAD(P)+].